Reading from the N-terminus, the 219-residue chain is Probable GTP-binding protein EngB (219 aa).

Residues 31–205 enclose the EngB-type G domain; that stretch reads VGVEIAFAGR…LSILNEWCHP (175 aa). GTP is bound by residues 39-46, 66-70, 84-87, 151-154, and 184-186; these read GRSNAGKS, GRTQL, DLPG, TKSD, and FSA. Residues Ser46 and Thr68 each coordinate Mg(2+).

This sequence belongs to the TRAFAC class TrmE-Era-EngA-EngB-Septin-like GTPase superfamily. EngB GTPase family. Mg(2+) is required as a cofactor.

Its function is as follows. Necessary for normal cell division and for the maintenance of normal septation. The protein is Probable GTP-binding protein EngB of Shewanella sp. (strain ANA-3).